The following is a 149-amino-acid chain: UPF0260 protein PA1299 (149 aa).

It belongs to the UPF0260 family.

The protein is UPF0260 protein PA1299 of Pseudomonas aeruginosa (strain ATCC 15692 / DSM 22644 / CIP 104116 / JCM 14847 / LMG 12228 / 1C / PRS 101 / PAO1).